A 417-amino-acid chain; its full sequence is Bifunctional thiamine biosynthesis protein ThiDN (417 aa).

The interval 1 to 235 is hydroxymethylpyrimidine/phosphomethylpyrimidine kinase; that stretch reads MVILAIGGYD…KSKFGYNSNP (235 aa). Glutamine 41 serves as a coordination point for 4-amino-5-hydroxymethyl-2-methylpyrimidine. Residues 236-417 form a thiamine-phosphate synthase region; the sequence is TYINKEKVIK…VIQKIYNTLM (182 aa).

It in the N-terminal section; belongs to the ThiD family. This sequence in the C-terminal section; belongs to the ThiN family.

It carries out the reaction 4-amino-5-hydroxymethyl-2-methylpyrimidine + ATP = 4-amino-2-methyl-5-(phosphooxymethyl)pyrimidine + ADP + H(+). The enzyme catalyses 4-amino-2-methyl-5-(phosphooxymethyl)pyrimidine + ATP = 4-amino-2-methyl-5-(diphosphooxymethyl)pyrimidine + ADP. It catalyses the reaction 2-[(2R,5Z)-2-carboxy-4-methylthiazol-5(2H)-ylidene]ethyl phosphate + 4-amino-2-methyl-5-(diphosphooxymethyl)pyrimidine + 2 H(+) = thiamine phosphate + CO2 + diphosphate. The catalysed reaction is 2-(2-carboxy-4-methylthiazol-5-yl)ethyl phosphate + 4-amino-2-methyl-5-(diphosphooxymethyl)pyrimidine + 2 H(+) = thiamine phosphate + CO2 + diphosphate. It carries out the reaction 4-methyl-5-(2-phosphooxyethyl)-thiazole + 4-amino-2-methyl-5-(diphosphooxymethyl)pyrimidine + H(+) = thiamine phosphate + diphosphate. Its pathway is cofactor biosynthesis; thiamine diphosphate biosynthesis; 4-amino-2-methyl-5-diphosphomethylpyrimidine from 5-amino-1-(5-phospho-D-ribosyl)imidazole. It participates in cofactor biosynthesis; thiamine diphosphate biosynthesis; thiamine phosphate from 4-amino-2-methyl-5-diphosphomethylpyrimidine and 4-methyl-5-(2-phosphoethyl)-thiazole: step 1/1. Catalyzes the phosphorylation of hydroxymethylpyrimidine phosphate (HMP-P) to HMP-PP, and of HMP to HMP-P. Its function is as follows. Condenses 4-methyl-5-(beta-hydroxyethyl)thiazole monophosphate (THZ-P) and 4-amino-5-hydroxymethyl pyrimidine pyrophosphate (HMP-PP) to form thiamine monophosphate (TMP). This Methanocaldococcus jannaschii (strain ATCC 43067 / DSM 2661 / JAL-1 / JCM 10045 / NBRC 100440) (Methanococcus jannaschii) protein is Bifunctional thiamine biosynthesis protein ThiDN (thiDN).